Here is a 225-residue protein sequence, read N- to C-terminus: uncharacterized protein (225 aa).

This is an uncharacterized protein from Mycoplasma pneumoniae (strain ATCC 29342 / M129 / Subtype 1) (Mycoplasmoides pneumoniae).